A 94-amino-acid chain; its full sequence is (2R)-sulfolactate sulfo-lyase subunit alpha (94 aa).

The 75-residue stretch at 16 to 90 folds into the AFP-like domain; the sequence is VVVVEGVEAG…GEHVHVHNVK (75 aa).

(2R)-sulfolactate sulfo-lyase is composed of a SuyA and a SuyB subunit.

It is found in the cytoplasm. It catalyses the reaction (2R)-3-sulfolactate = sulfite + pyruvate + H(+). Its function is as follows. Together with SuyB, desulfonates sulfolactate to pyruvate and sulfite. The polypeptide is (2R)-sulfolactate sulfo-lyase subunit alpha (suyA) (Chromohalobacter salexigens (strain ATCC BAA-138 / DSM 3043 / CIP 106854 / NCIMB 13768 / 1H11)).